Here is a 106-residue protein sequence, read N- to C-terminus: Large ribosomal subunit protein bL21 (106 aa).

It belongs to the bacterial ribosomal protein bL21 family. In terms of assembly, part of the 50S ribosomal subunit. Contacts protein L20.

Its function is as follows. This protein binds to 23S rRNA in the presence of protein L20. This Chlamydia felis (strain Fe/C-56) (Chlamydophila felis) protein is Large ribosomal subunit protein bL21.